The following is a 122-amino-acid chain: Basic phospholipase A2 Cdr-12 (122 aa).

Cystine bridges form between Cys-26/Cys-115, Cys-28/Cys-44, Cys-43/Cys-95, Cys-49/Cys-122, Cys-50/Cys-88, Cys-57/Cys-81, and Cys-75/Cys-86. Residues Tyr-27, Gly-29, and Gly-31 each coordinate Ca(2+). His-47 is an active-site residue. Asp-48 contributes to the Ca(2+) binding site. Asp-89 is an active-site residue.

It depends on Ca(2+) as a cofactor. In terms of tissue distribution, expressed by the venom gland.

The protein resides in the secreted. The catalysed reaction is a 1,2-diacyl-sn-glycero-3-phosphocholine + H2O = a 1-acyl-sn-glycero-3-phosphocholine + a fatty acid + H(+). Its function is as follows. Snake venom phospholipase A2 (PLA2) that induces myonecrosis and edema upon intramuscular injections in mice. In vitro, causes a potent blockade of neuromuscular transmission in young chicken biventer cervicis preparation and produces cytotoxicity in murine C2C12 skeletal muscle myotubes and lack cytolytic activity upon myoblasts in vitro. PLA2 catalyzes the calcium-dependent hydrolysis of the 2-acyl groups in 3-sn-phosphoglycerides. This is Basic phospholipase A2 Cdr-12 from Crotalus durissus ruruima (South American rattlesnake).